The following is a 337-amino-acid chain: GTPase Obg (337 aa).

The Obg domain maps to methionine 1–leucine 159. Positions serine 160 to isoleucine 329 constitute an OBG-type G domain. GTP contacts are provided by residues glycine 166–serine 173, phenylalanine 191–arginine 195, aspartate 212–glycine 215, asparagine 279–aspartate 282, and aspartate 310–aspartate 312. Mg(2+)-binding residues include serine 173 and threonine 193.

It belongs to the TRAFAC class OBG-HflX-like GTPase superfamily. OBG GTPase family. Monomer. Requires Mg(2+) as cofactor.

The protein resides in the cytoplasm. Functionally, an essential GTPase which binds GTP, GDP and possibly (p)ppGpp with moderate affinity, with high nucleotide exchange rates and a fairly low GTP hydrolysis rate. Plays a role in control of the cell cycle, stress response, ribosome biogenesis and in those bacteria that undergo differentiation, in morphogenesis control. This is GTPase Obg from Wolbachia pipientis subsp. Culex pipiens (strain wPip).